A 323-amino-acid chain; its full sequence is Cyclin-D5-1 (323 aa).

2 disordered regions span residues 17–36 (ESSL…KQEP) and 281–323 (HMTP…MRRL).

The protein belongs to the cyclin family. Cyclin D subfamily.

In Arabidopsis thaliana (Mouse-ear cress), this protein is Cyclin-D5-1 (CYCD5-1).